A 370-amino-acid polypeptide reads, in one-letter code: MVKVLAVLYDGGEHAKQVPGLLGTTENELGLRKWLEDQGHTLVTTSDKDREGSTFDRELEDAEIIITTPFHPGYLTAERLARAKKLKLAVTAGIGSDHVDLDAANKTNGGITVAEVTGSNVVSVAEHVVMTILVLVRNFVPAHEQIEAGRWDVAEVAKDEYDLEGKVVGTVGVGRIGERVLRRLKGFDCKELLYYDYQPLSPEKEKEIGCRRVENLEEMLAQCDVVTINCPLHESTRGLFNKDLISKMKRGSWLVNTARGAIVVKEDVAEALRTGHLRGYGGDVWFPQPAPADHVLRTAKNPFGGGNAMVPHMSGTSLDAQKRYAEGVKRILDSYLSGRFDYRPEDLIVHQGKYATRAYGQREDVKIPGQ.

Substrate is bound by residues Ile-94 and Asn-120. NAD(+)-binding positions include 175–176, Asp-196, 231–235, Thr-257, Asp-283, and 312–315; these read RI, PLHES, and HMSG.

The protein belongs to the D-isomer specific 2-hydroxyacid dehydrogenase family. FDH subfamily. In terms of assembly, homodimer.

Its subcellular location is the cytoplasm. It catalyses the reaction formate + NAD(+) = CO2 + NADH. Its function is as follows. Catalyzes the NAD(+)-dependent oxidation of formate to carbon dioxide. Formate oxidation is the final step in the methanol oxidation pathway in methylotrophic microorganisms. Has a role in the detoxification of exogenous formate in non-methylotrophic organisms. The polypeptide is Formate dehydrogenase (Chaetomium thermophilum (strain DSM 1495 / CBS 144.50 / IMI 039719) (Thermochaetoides thermophila)).